A 502-amino-acid chain; its full sequence is ATP synthase subunit alpha (502 aa).

169-176 (GDRQTGKT) lines the ATP pocket.

This sequence belongs to the ATPase alpha/beta chains family. In terms of assembly, F-type ATPases have 2 components, CF(1) - the catalytic core - and CF(0) - the membrane proton channel. CF(1) has five subunits: alpha(3), beta(3), gamma(1), delta(1), epsilon(1). CF(0) has three main subunits: a(1), b(2) and c(9-12). The alpha and beta chains form an alternating ring which encloses part of the gamma chain. CF(1) is attached to CF(0) by a central stalk formed by the gamma and epsilon chains, while a peripheral stalk is formed by the delta and b chains. The F(1)F(0) complex interacts with SpoIIIJ and YqjG; YqgA is found in the same complex.

Its subcellular location is the cell membrane. The protein resides in the membrane raft. It catalyses the reaction ATP + H2O + 4 H(+)(in) = ADP + phosphate + 5 H(+)(out). Functionally, produces ATP from ADP in the presence of a proton gradient across the membrane. The alpha chain is a regulatory subunit. This Bacillus subtilis (strain 168) protein is ATP synthase subunit alpha.